A 339-amino-acid chain; its full sequence is Dihydroorotate dehydrogenase (quinone) (339 aa).

FMN-binding positions include 62–66 (AGLDK) and threonine 86. Lysine 66 contacts substrate. Position 111-115 (111-115 (NRMGF)) interacts with substrate. FMN is bound by residues asparagine 139 and asparagine 172. Asparagine 172 is a substrate binding site. Serine 175 functions as the Nucleophile in the catalytic mechanism. Residue asparagine 177 participates in substrate binding. Lysine 217 and threonine 245 together coordinate FMN. A substrate-binding site is contributed by 246–247 (NT). Residues glycine 268, glycine 297, and 318–319 (YS) each bind FMN.

This sequence belongs to the dihydroorotate dehydrogenase family. Type 2 subfamily. Monomer. Requires FMN as cofactor.

Its subcellular location is the cell membrane. The enzyme catalyses (S)-dihydroorotate + a quinone = orotate + a quinol. The protein operates within pyrimidine metabolism; UMP biosynthesis via de novo pathway; orotate from (S)-dihydroorotate (quinone route): step 1/1. Functionally, catalyzes the conversion of dihydroorotate to orotate with quinone as electron acceptor. This is Dihydroorotate dehydrogenase (quinone) from Shewanella amazonensis (strain ATCC BAA-1098 / SB2B).